The sequence spans 315 residues: Olfactory receptor 2V1 (315 aa).

Over 1-31 (MGRWVNQSYTDGFFLLGIFSHSQTDLVLFSA) the chain is Extracellular. Residue Asn-6 is glycosylated (N-linked (GlcNAc...) asparagine). The chain crosses the membrane as a helical span at residues 32–52 (VMVVFTVALCGNVLLIFLIYL). At 53–58 (DAGLHT) the chain is on the cytoplasmic side. Residues 59 to 79 (PMYFFLSQLSLMDLMLVCNIV) form a helical membrane-spanning segment. Over 80–99 (PKMAANFLSGRKSISFVGCG) the chain is Extracellular. Cys-98 and Cys-180 are oxidised to a cystine. The helical transmembrane segment at 100–120 (IQIGFFVSLVGSEGLLLGLMA) threads the bilayer. The Cytoplasmic segment spans residues 121-149 (YDRYVAVSHPLHYPILMNQRVCLQITGSS). Residues 150–170 (WAFGIIDGVIQMVAAMGLPYC) form a helical membrane-spanning segment. Residues 171–198 (GSRSVDHFFCEVQALLKLACADTSLFDT) lie on the Extracellular side of the membrane. The chain crosses the membrane as a helical span at residues 199 to 219 (LLFACCVFMLLLPFSIIMASY). Residues 220-238 (ACILGAVLRIRSAQAWKKA) are Cytoplasmic-facing. The chain crosses the membrane as a helical span at residues 239–259 (LATCSSHLTAVTLFYGAAMFM). The Extracellular segment spans residues 260 to 272 (YLRPRRYRAPSHD). Residues 273-293 (KVASIFYTVLTPMLNPLIYSL) form a helical membrane-spanning segment. The Cytoplasmic portion of the chain corresponds to 294 to 315 (RNGEVMGALRKGLDRCRIGSQH).

This sequence belongs to the G-protein coupled receptor 1 family.

It is found in the cell membrane. In terms of biological role, odorant receptor. This Homo sapiens (Human) protein is Olfactory receptor 2V1 (OR2V1).